A 144-amino-acid polypeptide reads, in one-letter code: Small ribosomal subunit protein bS6 (144 aa).

The interval 92-144 is disordered; the sequence is KVDGHDEGPSVQMQKRDDRGDREERGDRGDRGDRGPRGDRGPREDRGPRPERR. Residues 93 to 144 show a composition bias toward basic and acidic residues; the sequence is VDGHDEGPSVQMQKRDDRGDREERGDRGDRGDRGPRGDRGPREDRGPRPERR.

The protein belongs to the bacterial ribosomal protein bS6 family.

Its function is as follows. Binds together with bS18 to 16S ribosomal RNA. The sequence is that of Small ribosomal subunit protein bS6 (rpsF) from Rhodobacter capsulatus (strain ATCC BAA-309 / NBRC 16581 / SB1003).